The following is a 314-amino-acid chain: tRNA pseudouridine synthase B (314 aa).

The active-site Nucleophile is the Asp47.

It belongs to the pseudouridine synthase TruB family. Type 1 subfamily.

The enzyme catalyses uridine(55) in tRNA = pseudouridine(55) in tRNA. Functionally, responsible for synthesis of pseudouridine from uracil-55 in the psi GC loop of transfer RNAs. The sequence is that of tRNA pseudouridine synthase B from Vibrio parahaemolyticus serotype O3:K6 (strain RIMD 2210633).